The following is a 208-amino-acid chain: Small ribosomal subunit protein uS4 (208 aa).

One can recognise an S4 RNA-binding domain in the interval 97-158 (TRLDNVIYRM…RAQKYLCVQE (62 aa)).

The protein belongs to the universal ribosomal protein uS4 family. Part of the 30S ribosomal subunit. Contacts protein S5. The interaction surface between S4 and S5 is involved in control of translational fidelity.

One of the primary rRNA binding proteins, it binds directly to 16S rRNA where it nucleates assembly of the body of the 30S subunit. In terms of biological role, with S5 and S12 plays an important role in translational accuracy. This is Small ribosomal subunit protein uS4 from Xylella fastidiosa (strain M23).